We begin with the raw amino-acid sequence, 555 residues long: MATSAVVNCLGGVRPHTIRYEPNMWTHTFSNFSIDEQVQGEYAEEIEALKQEVRSMLTAATTCKEQLILIDTLERLGLSYHFETEIEQKLKEIILHINREEDASGGDCDLYTTSLGFRVIRQHQYHISCGVFEKYLDKDGKFEESLSSDTEGILSLYEAAHVRFRDETLLQEAARFSRHHLKGMEEVLESPLREKVQRALQHPLHRDIPIFYAHFFISNIYQKDDSRNELLLKLAKSNFMFLQNLYKEELSQLSRWWNKFDLKSKLPYARDRLVEAYIWGVGYHYEPRYAYVRRGLVIGIQIIAIMDDTYDNYATVDEAQLFTEMFERWSMDGIDGVPDYLKIAYHFVVSAFEDYERDAGKLGKQFAAPYFKQTIQQLARAYNQELKWVMGTQSMPSFQDYAKNSEITSCIYIMSASVFHGLESVTQETIDWLKNEPNFAVSTGMIGRYWDDIGSHERESRGGKMLTAVGCYMKQYGVSKKEAVRKFREQVEDLWKDVNKGYTAMTCMPRETAVLFLNYARMCDASYTENNDDGYTDPDFSKRKISALFLDPLVF.

(2E,6E)-farnesyl diphosphate-binding residues include Arg270, Asp307, Asp311, Arg448, and Asp451. Mg(2+)-binding residues include Asp307 and Asp311. Positions 307–311 (DDTYD) match the DDXXD motif motif. Mg(2+)-binding residues include Asp451, Ser455, and Glu459.

Belongs to the terpene synthase family. The cofactor is Mg(2+).

It carries out the reaction (2E,6E)-farnesyl diphosphate + H2O = tau-cadinol + diphosphate. The catalysed reaction is (2E,6E)-farnesyl diphosphate = (+)-gamma-cadinene + diphosphate. Its pathway is secondary metabolite biosynthesis; terpenoid biosynthesis. Sesquiterpene synthase that catalyzes the formation of sesquiterpenes and sesquiterpenoid alcohols. Converts farnesyl diphosphate (FPP) to tau-cadinol. Converts FPP to gamma-cadinene. Tau-cadinol is the major product. In Lavandula angustifolia (Lavender), this protein is Tau-cadinol synthase.